The following is a 62-amino-acid chain: Photosystem II reaction center protein Z (62 aa).

2 helical membrane-spanning segments follow: residues 8–28 and 41–61; these read ALIALVLFSFVMVIGVPVAYA and YLGSAIWAILVVIVAILNFFV.

Belongs to the PsbZ family. In terms of assembly, PSII is composed of 1 copy each of membrane proteins PsbA, PsbB, PsbC, PsbD, PsbE, PsbF, PsbH, PsbI, PsbJ, PsbK, PsbL, PsbM, PsbT, PsbX, PsbY, PsbZ, Psb30/Ycf12, peripheral proteins PsbO, CyanoQ (PsbQ), PsbU, PsbV and a large number of cofactors. It forms dimeric complexes.

Its subcellular location is the cellular thylakoid membrane. Functionally, may control the interaction of photosystem II (PSII) cores with the light-harvesting antenna, regulates electron flow through the 2 photosystem reaction centers. PSII is a light-driven water plastoquinone oxidoreductase, using light energy to abstract electrons from H(2)O, generating a proton gradient subsequently used for ATP formation. This Rippkaea orientalis (strain PCC 8801 / RF-1) (Cyanothece sp. (strain PCC 8801)) protein is Photosystem II reaction center protein Z.